The chain runs to 131 residues: Transcription antitermination protein NusB (131 aa).

Belongs to the NusB family.

Its function is as follows. Involved in transcription antitermination. Required for transcription of ribosomal RNA (rRNA) genes. Binds specifically to the boxA antiterminator sequence of the ribosomal RNA (rrn) operons. This Campylobacter concisus (strain 13826) protein is Transcription antitermination protein NusB.